The chain runs to 352 residues: C-X-C chemokine receptor type 4 (352 aa).

The segment at 1 to 21 (MEGISIYTSDNYTEEMGSGDY) is important for chemokine binding and signaling. At 1-38 (MEGISIYTSDNYTEEMGSGDYDSIKEPCFREENAHFNR) the chain is on the extracellular side. Residue Tyr7 is modified to Sulfotyrosine. Asn11 carries an N-linked (GlcNAc...) asparagine glycan. Sulfotyrosine is present on Tyr12. O-linked (Xyl...) (chondroitin sulfate) serine glycosylation is present at Ser18. Tyr21 bears the Sulfotyrosine mark. 2 cysteine pairs are disulfide-bonded: Cys28/Cys274 and Cys109/Cys186. The chain crosses the membrane as a helical span at residues 39 to 63 (IFLPTIYSIIFLTGIVGNGLVILVM). The Cytoplasmic segment spans residues 64–77 (GYQKKLRSMTDKYR). A helical membrane pass occupies residues 78–99 (LHLSVADLLFVITLPFWAVDAV). The tract at residues 94–97 (WAVD) is chemokine binding. Over 100–110 (ANWYFGNFLCK) the chain is Extracellular. The helical transmembrane segment at 111–130 (AVHVIYTVNLYSSVLILAFI) threads the bilayer. The tract at residues 113 to 117 (HVIYT) is chemokine binding. Residues 131-154 (SLDRYLAIVHATNSQKPRKLLAEK) are Cytoplasmic-facing. The Important for signaling signature appears at 133 to 135 (DRY). The tract at residues 135-147 (YLAIVHATNSQKP) is involved in dimerization; when bound to chemokine. A helical transmembrane segment spans residues 155–174 (VVYVGVWIPALLLTIPDFIF). The Extracellular portion of the chain corresponds to 175-195 (ASVSEADDRYICDRFYPNDLW). Residues 186 to 190 (CDRFY) form a chemokine binding, important for signaling region. The segment at 191–210 (PNDLWVVVFQFQHIMVGLIL) is involved in dimerization. The chain crosses the membrane as a helical span at residues 196–216 (VVVFQFQHIMVGLILPGIDIL). Over 217–241 (SCYCIIISKLSHSKGHQKRKALKTT) the chain is Cytoplasmic. The chain crosses the membrane as a helical span at residues 242-261 (VILILAFFACWLPYYIGISI). Residues 262 to 282 (DSFILLEIIKQGCEFENTVHK) are Extracellular-facing. The involved in dimerization stretch occupies residues 266 to 268 (LLE). The chain crosses the membrane as a helical span at residues 283–302 (WISITEALAFFHCCLNPILY). Topologically, residues 303 to 352 (AFLGAKFKTSAQHALTSVSRGSSLKILSKGKRGGHSSVSTESESSSFHSS) are cytoplasmic. A phosphoserine mark is found at Ser319 and Ser321. A phosphoserine; by PKC and GRK6 mark is found at Ser324 and Ser325. Residues 329-352 (LSKGKRGGHSSVSTESESSSFHSS) form a disordered region. Residue Ser330 is modified to Phosphoserine; by GRK6. Lys331 participates in a covalent cross-link: Glycyl lysine isopeptide (Lys-Gly) (interchain with G-Cter in ubiquitin). Residues 337-352 (HSSVSTESESSSFHSS) show a composition bias toward low complexity. The residue at position 339 (Ser339) is a Phosphoserine; by GRK6. A phosphoserine mark is found at Ser348 and Ser351.

The protein belongs to the G-protein coupled receptor 1 family. Monomer. Can form homodimers. Interacts with CD164. Interacts with ARRB2; the interaction is dependent on the C-terminal phosphorylation of CXCR4 and allows activation of MAPK1 and MAPK3. Interacts with ARR3; the interaction is dependent on the C-terminal phosphorylation of CXCR4 and modulates calcium mobilization. Interacts with RNF113A; the interaction, enhanced by CXCL12, promotes CXCR4 ubiquitination and subsequent degradation. Interacts (via the cytoplasmic C-terminal) with ITCH (via the WW domains I and II); the interaction, enhanced by CXCL12, promotes CXCR4 ubiquitination and leads to its degradation. Interacts with extracellular ubiquitin. Interacts with DBN1; this interaction is enhanced by antigenic stimulation. Following LPS binding, may form a complex with GDF5, HSP90AA1 and HSPA8. Phosphorylated on agonist stimulation. Rapidly phosphorylated on serine and threonine residues in the C-terminal. Phosphorylation at Ser-324 and Ser-325 leads to recruitment of ITCH, ubiquitination and protein degradation. Post-translationally, ubiquitinated after ligand binding, leading to its degradation. Ubiquitinated by ITCH at the cell membrane on agonist stimulation. The ubiquitin-dependent mechanism, endosomal sorting complex required for transport (ESCRT), then targets CXCR4 for lysosomal degradation. This process is dependent also on prior Ser-/Thr-phosphorylation in the C-terminal of CXCR4. Also binding of ARRB1 to STAM negatively regulates CXCR4 sorting to lysosomes though modulating ubiquitination of SFR5S. In terms of processing, sulfation is required for efficient binding of CXCL12/SDF-1alpha and promotes its dimerization. O- and N-glycosylated. N-glycosylation can mask coreceptor function. The O-glycosylation chondroitin sulfate attachment does not affect interaction with CXCL12/SDF-1alpha nor its coreceptor activity.

The protein localises to the cell membrane. Its subcellular location is the cell junction. The protein resides in the early endosome. It is found in the late endosome. It localises to the lysosome. Receptor for the C-X-C chemokine CXCL12/SDF-1 that transduces a signal by increasing intracellular calcium ion levels and enhancing MAPK1/MAPK3 activation. Involved in the AKT signaling cascade. Plays a role in regulation of cell migration, e.g. during wound healing. Acts as a receptor for extracellular ubiquitin; leading to enhanced intracellular calcium ions and reduced cellular cAMP levels. Binds bacterial lipopolysaccharide (LPS) et mediates LPS-induced inflammatory response, including TNF secretion by monocytes. Involved in hematopoiesis and in cardiac ventricular septum formation. Also plays an essential role in vascularization of the gastrointestinal tract, probably by regulating vascular branching and/or remodeling processes in endothelial cells. Involved in cerebellar development. In the CNS, could mediate hippocampal-neuron survival. The chain is C-X-C chemokine receptor type 4 (CXCR4) from Macaca mulatta (Rhesus macaque).